The following is a 955-amino-acid chain: Leucine--tRNA ligase (955 aa).

The 'HIGH' region motif lies at 51–61; the sequence is PYLNGVLHAGH. The short motif at 647–651 is the 'KMSKS' region element; sequence KLSKS. ATP is bound at residue K650.

This sequence belongs to the class-I aminoacyl-tRNA synthetase family.

The protein resides in the cytoplasm. The catalysed reaction is tRNA(Leu) + L-leucine + ATP = L-leucyl-tRNA(Leu) + AMP + diphosphate. The polypeptide is Leucine--tRNA ligase (Methanococcus maripaludis (strain DSM 14266 / JCM 13030 / NBRC 101832 / S2 / LL)).